Here is a 1143-residue protein sequence, read N- to C-terminus: MHVMNCVSLVSDKENGNIATAPGFMIGQTPPPAPPPPPPPPPPSPPCSCSREECPSSPPPPPPPPLPGEPPIPPPPPGLPPTTHMNGYSHLGKKKRMRSFFWKTIPEEQVRGKTNIWTLAARQEHHYQIDTKTIEELFGQQEDTTKSSLPRRGRTLNSSFREAREEITILDAKRSMNIGIFLKQFKKSPRSIVEDIHQGKSEHYGSETLREFLKFLPESEEVKKLKAFSGDVSKLSLADSFLYGLIQVPNYSLRIEAMVLKKEFLPSCSSLYTDITVLRTAIKELMSCEELHSILHLVLQAGNIMNAGGYAGNAVGFKLSSLLKLADTKANKPGMNLLHFVAQEAQKKDTILLNFSEKLHHVQKTARLSLENTEAELHLLFVRTKSLKENIQRDGELCQQMEDFLQFAIEKLRELECWKQELQDEAYTLIDFFCEDKKTMKLDECFQIFRDFCTKFNKAVKDNHDREAQELRQLQRLKEQEQKQRSWATGELGAFGRSSSENDVELLTKKGAEGLLPFLHPRPISPSSPSYRPPNTRRSRLSLGPSADRELLTFLESSTGSPEEPNKFHSLPRSSPRQARPTIACLEPAEVRHQDSSFAHKPQASGGQEEAPNPPSAQAHQLAAAQPENHASAFPRARRQGVSVLRKRYSEPVSLGSAQSPPLSPLALGIKEHELVTGLAQFNLQGSQGMEETSQLTLSDFSPMELESVGHRGPQSLSASSSSLTPMGRDALGSLSPALEDGKAAPDEPGSAALGSVGSSDPENKDPRPLFCISDTTDCSLTLDCSEGTDSRPRGGDPEEGGEGDGSMSSGVGEMGDSQVSSNPTSSPPGEAPAPVSVDSEPSCKGGLPRDKPTKRKDVVAPKRGSLKEASPGASKPGSARRSQGAVAKSVRTLTASENESMRKVMPITKSSRGAGWRRPELSSRGPSQNPPSSTDTVWSRQNSVRRASTGAEEQRLPRGSSGSSSTRPGRDVPLQPRGSFKKPSAKPLRNLPRQKPEENKTCRAHSEGPESPKEEPKTPSVPSVPHELPRVPSFARNTVASSSRSMRTDLPPVAKAPGITRTVSQRQLRVKGDPEDAAPKDSSTLRRASSARAPKKRPESAEGPSANTEAPLKARGAGERASLRRKDSSRTTLGRILNPLRK.

The segment at 16 to 89 is disordered; that stretch reads GNIATAPGFM…PPTTHMNGYS (74 aa). 2 stretches are compositionally biased toward pro residues: residues 29–46 and 56–80; these read TPPPAPPPPPPPPPPSPP and SSPPPPPPPPLPGEPPIPPPPPGLP. The region spanning 87–482 is the FH2 domain; it reads GYSHLGKKKR…QLQRLKEQEQ (396 aa). Ser500 is subject to Phosphoserine. Positions 517-638 are disordered; sequence PFLHPRPISP…NHASAFPRAR (122 aa). Low complexity predominate over residues 521–534; that stretch reads PRPISPSSPSYRPP. A phosphoserine mark is found at Ser650, Ser660, and Ser664. The interval 706-1143 is disordered; the sequence is LESVGHRGPQ…LGRILNPLRK (438 aa). Over residues 806 to 818 the composition is skewed to low complexity; the sequence is GSMSSGVGEMGDS. The span at 848–861 shows a compositional bias: basic and acidic residues; the sequence is LPRDKPTKRKDVVA. Over residues 925-947 the composition is skewed to polar residues; that stretch reads RGPSQNPPSSTDTVWSRQNSVRR. The span at 958 to 968 shows a compositional bias: low complexity; that stretch reads PRGSSGSSSTR. The segment at 960-1086 is MTBD; microtubule-binding domain; the sequence is GSSGSSSTRP…DAAPKDSSTL (127 aa). The segment covering 995–1018 has biased composition (basic and acidic residues); the sequence is QKPEENKTCRAHSEGPESPKEEPK. Residues 1036 to 1046 are compositionally biased toward polar residues; sequence ARNTVASSSRS. 2 stretches are compositionally biased toward basic and acidic residues: residues 1071-1080 and 1117-1130; these read VKGDPEDAAP and GAGERASLRRKDSS.

In terms of assembly, interacts with CEP170.

It localises to the cell projection. It is found in the cilium. The protein localises to the golgi apparatus. Functionally, microtubule-associated formin which regulates both actin and microtubule dynamics. Induces microtubule acetylation and stabilization and actin stress fiber formation. Regulates Golgi ribbon formation. Required for normal cilia assembly. Early in cilia assembly, may assist in the maturation and positioning of the centrosome/basal body, and once cilia assembly has initiated, may also promote cilia elongation by inhibiting disassembly. The protein is FH2 domain-containing protein 1 (FHDC1) of Homo sapiens (Human).